The sequence spans 264 residues: [LysW]-aminoadipate/[LysW]-glutamate kinase (264 aa).

Residues 35 to 36 (GG), R62, and N167 each bind substrate.

It belongs to the acetylglutamate kinase family. LysZ subfamily.

Its subcellular location is the cytoplasm. The catalysed reaction is [amino-group carrier protein]-C-terminal-N-(1,4-dicarboxybutan-1-yl)-L-glutamine + ATP = [amino-group carrier protein]-C-terminal-N-(1-carboxy-5-phosphooxy-5-oxopentan-1-yl)-L-glutamine + ADP. It catalyses the reaction [amino-group carrier protein]-C-terminal-gamma-(L-glutamyl)-L-glutamate + ATP = [amino-group carrier protein]-C-terminal-gamma-(5-phospho-L-glutamyl)-L-glutamate + ADP. The protein operates within amino-acid biosynthesis; L-lysine biosynthesis via AAA pathway; L-lysine from L-alpha-aminoadipate (Thermus route): step 2/5. It participates in amino-acid biosynthesis; L-arginine biosynthesis. In terms of biological role, involved in both the arginine and lysine biosynthetic pathways. Phosphorylates the LysW-bound precursors glutamate (for arginine biosynthesis), respectively alpha-aminoadipate (for lysine biosynthesis). The chain is [LysW]-aminoadipate/[LysW]-glutamate kinase from Saccharolobus islandicus (strain L.S.2.15 / Lassen #1) (Sulfolobus islandicus).